Consider the following 609-residue polypeptide: UvrABC system protein C (609 aa).

A GIY-YIG domain is found at 15–92 (TGSGVYQIQD…IKQFRPRYNV (78 aa)). The region spanning 202-237 (DQVIIKLTERMEVASENLVFEEAAHYRDQIRQLRRL) is the UVR domain.

Belongs to the UvrC family. In terms of assembly, interacts with UvrB in an incision complex.

The protein resides in the cytoplasm. Functionally, the UvrABC repair system catalyzes the recognition and processing of DNA lesions. UvrC both incises the 5' and 3' sides of the lesion. The N-terminal half is responsible for the 3' incision and the C-terminal half is responsible for the 5' incision. The sequence is that of UvrABC system protein C from Coxiella burnetii (strain Dugway 5J108-111).